Here is a 545-residue protein sequence, read N- to C-terminus: Pectinesterase/pectinesterase inhibitor (545 aa).

Positions 1–37 are cleaved as a signal peptide; sequence MEINQPNLLEASKSCYSKITFFLLVISFAALVSTGFS. The pectinesterase inhibitor stretch occupies residues 38–191; it reads SPELSLHHKI…ILRARTSLAI (154 aa). Positions 38–228 are excised as a propeptide; sequence SPELSLHHKI…RRLLQTLGKD (191 aa). N-linked (GlcNAc...) asparagine glycosylation occurs at Asn135. The tract at residues 232 to 530 is pectinesterase; it reads DIVVAKDGSG…TVAELIQGGS (299 aa). Substrate contacts are provided by Thr307 and Gln337. Cys326 and Cys353 are disulfide-bonded. The active-site Proton donor; for pectinesterase activity is the Asp360. A glycan (N-linked (GlcNAc...) (complex) asparagine) is linked at Asn375. Asp381 serves as the catalytic Nucleophile; for pectinesterase activity. A disulfide bridge links Cys394 with Cys428. Arg449 and Trp451 together coordinate substrate.

In the N-terminal section; belongs to the PMEI family. It in the C-terminal section; belongs to the pectinesterase family. In terms of processing, N-glycosylated.

The protein resides in the secreted. It localises to the cell wall. The enzyme catalyses [(1-&gt;4)-alpha-D-galacturonosyl methyl ester](n) + n H2O = [(1-&gt;4)-alpha-D-galacturonosyl](n) + n methanol + n H(+). It functions in the pathway glycan metabolism; pectin degradation; 2-dehydro-3-deoxy-D-gluconate from pectin: step 1/5. Acts in the modification of cell walls via demethylesterification of cell wall pectin. The protein is Pectinesterase/pectinesterase inhibitor of Ficus pumila var. awkeotsang (Jelly fig).